Here is an 84-residue protein sequence, read N- to C-terminus: Large ribosomal subunit protein bL27 (84 aa).

The interval methionine 1–tyrosine 20 is disordered.

It belongs to the bacterial ribosomal protein bL27 family.

The polypeptide is Large ribosomal subunit protein bL27 (Dictyoglomus thermophilum (strain ATCC 35947 / DSM 3960 / H-6-12)).